The chain runs to 908 residues: Adhesion G-protein coupled receptor F1 (908 aa).

The N-terminal stretch at 1–20 (MRIGLLWLVPLFTLTEGTDG) is a signal peptide. Over 21–588 (FLQQKNDGRR…VVPVVKWITY (568 aa)) the chain is Extracellular. N-linked (GlcNAc...) asparagine glycosylation is found at N133, N167, N328, N353, N367, N388, N422, N453, N510, N519, N526, and N551. Residues 147–255 (ERAKVWGTFE…GSFRVFGKAP (109 aa)) enclose the SEA domain. Residues 434–577 (PVTQIQSTRG…SMLMSPFVPS (144 aa)) form the GAIN-B domain. Intrachain disulfides connect C532–C559 and C547–C561. The GPS stretch occupies residues 532–577 (CVFWDFSQLQWSNAGCQLVNETLDTVLCRCSHLTSFSMLMSPFVPS). The interval 566 to 574 (SFSMLMSPF) is stachel. A helical membrane pass occupies residues 589–609 (IGLSISIASLILCLIIESLFW). At 610–622 (KQTKRSQTSYTRN) the chain is on the cytoplasmic side. Residues 623–643 (ICLVNIAVSLLIADVWFIIAA) traverse the membrane as a helical segment. The Extracellular portion of the chain corresponds to 644–658 (TVDPSVSPSGVCVAA). A disulfide bridge connects residues C655 and C731. The helical transmembrane segment at 659 to 679 (VFFTHFFYLAVFFWMLVLGIL) threads the bilayer. Residues 680–697 (LAYRIILVFHHMALTTMM) lie on the Cytoplasmic side of the membrane. A helical membrane pass occupies residues 698 to 718 (AIGFCLGYGCPLLISIITLAV). Residues 719–742 (TQPSNSYKRNDVCWLNWSDKSKPL) lie on the Extracellular side of the membrane. N734 carries an N-linked (GlcNAc...) asparagine glycan. Residues 743–763 (LAFVVPALTIVAVNLVVVLLV) form a helical membrane-spanning segment. The Cytoplasmic portion of the chain corresponds to 764–789 (LRKLWRPAVGERLNQDDKATAIRMGK). The chain crosses the membrane as a helical span at residues 790–810 (SLLVLTPLLGLTWGFGIGTMA). Topologically, residues 811–818 (NSHNLAWH) are extracellular. Residues 819-839 (VLFALLNAFQGFFIFCFGILL) form a helical membrane-spanning segment. Residues 840 to 908 (DTKLRQLLSN…ITLTQFLSTE (69 aa)) are Cytoplasmic-facing.

This sequence belongs to the G-protein coupled receptor 2 family. Adhesion G-protein coupled receptor (ADGR) subfamily. As to quaternary structure, heterodimer of 2 chains generated by proteolytic processing; the large extracellular N-terminal fragment and the membrane-bound C-terminal fragment predominantly remain associated and non-covalently linked. Post-translationally, autoproteolytically processed at the GPS region of the GAIN-B domain; this cleavage modulates receptor activity. As to expression, expressed in liver, kidney and adrenal gland. In kidney strong expression in the renal pelvis and the ureter.

It is found in the cell membrane. Forms a heterodimer of 2 chains generated by proteolytic processing that remain associated through non-covalent interactions mediated by the GAIN-B domain. In the inactivated receptor, the Stachel sequence (also named stalk) is embedded in the GAIN-B domain, where it adopts a beta-strand conformation. On activation, the Stachel moves into the 7 transmembrane region and adopts a twisted hook-shaped configuration that forms contacts within the receptor, leading to coupling of a G-alpha protein, which activates signaling. The cleaved GAIN-B and N-terminal domains can then dissociate from the rest of the receptor. Functionally, adhesion G-protein coupled receptor (aGPCR) for N-docosahexaenoylethanolamine (synaptamide), an omega-3 fatty acid lipid highly enriched in the brain. Ligand binding causes a conformation change that triggers signaling via guanine nucleotide-binding proteins (G proteins) and modulates the activity of downstream effectors, such as adenylate cyclase. ADGRF1 is coupled to G(s) G proteins and mediates activation of adenylate cyclase activity. Also able to couple to G(q), G(i) and G(12)/G(13) G proteins; additional evidence is however required to confirm this result in vivo. Involved in the development of neurons and cognitive function. In liver, involved in fat accumulation. This Mus musculus (Mouse) protein is Adhesion G-protein coupled receptor F1.